Reading from the N-terminus, the 421-residue chain is Testin (421 aa).

One can recognise a PET domain in the interval 92–199 (MILTNPVAAK…GDVKLPCEMD (108 aa)). The interval 133 to 164 (EKQPVAGSEGAQYRKKQLAKQLPAHDQDPSKC) is disordered. A compositionally biased stretch (basic and acidic residues) spans 155-164 (PAHDQDPSKC). LIM zinc-binding domains follow at residues 234–297 (YSCY…CDSE), 299–359 (PRCA…NHAV), and 362–421 (QGCH…KRMS).

It belongs to the prickle / espinas / testin family. As to quaternary structure, interacts via LIM domain 1 with ZYX. Interacts (via LIM domain 3) with ENAH and VASP. Interacts with ALKBH4, talin, actin, alpha-actinin, GRIP1 and PXN. Interacts (via LIM domain 2) with ACTL7A (via N-terminus). Heterodimer with ACTL7A; the heterodimer interacts with ENAH to form a heterotrimer.

Its subcellular location is the cytoplasm. The protein resides in the cell junction. It is found in the focal adhesion. Functionally, scaffold protein that may play a role in cell adhesion, cell spreading and in the reorganization of the actin cytoskeleton. Plays a role in the regulation of cell proliferation. May act as a tumor suppressor. The polypeptide is Testin (TES) (Pan troglodytes (Chimpanzee)).